We begin with the raw amino-acid sequence, 365 residues long: Zinc finger protein lsy-2 (365 aa).

The disordered stretch occupies residues 1-36 (MLTRRNAKQSQRNSADQSLSEFNSSSMTHGSNQSVY). Polar residues predominate over residues 8 to 36 (KQSQRNSADQSLSEFNSSSMTHGSNQSVY). C2H2-type zinc fingers lie at residues 78–100 (HQCNVCNKIFVSYKGLQQHAVIH), 106–128 (FRCDICSKSFRFKSNLFEHRSVH), 134–156 (HACPYCGKTCRLKGNLKKHLRTH), 264–287 (HDCPVCKSQFMTRMDCVSHHTLEH), and 296–318 (FFCEKCYRPFADEASYNQHMSYH).

It localises to the nucleus speckle. In terms of biological role, involved in transcriptional regulation. Required to specify left-right asymmetry of the ASE gustatory neurons, probably acting upstream of microRNA lsy-6. Involved in maintaining the distinction between somatic and germ cells, perhaps acting by repressing germ cell-specific genes in somatic cells. The protein is Zinc finger protein lsy-2 of Caenorhabditis elegans.